The following is a 404-amino-acid chain: Type II restriction enzyme EcoRII (404 aa).

The active site involves Tyr308.

Homodimer. The cofactor is Mg(2+).

The catalysed reaction is Endonucleolytic cleavage of DNA to give specific double-stranded fragments with terminal 5'-phosphates.. In terms of biological role, an E and P subtype restriction enzyme that recognizes the double-stranded sequence 5'-CCWGG-3' and cleaves before C-1. This is Type II restriction enzyme EcoRII (ecoRIIR) from Escherichia coli.